A 247-amino-acid polypeptide reads, in one-letter code: MNVLPCSINTLKGLYDISGVEVGQHFYWQIGGFQVHAQVLITSWVVIAILLGSATIAVRNPQTIPTDGQNFFEYVLEFIRDLSKTQIGEEYGPWVPFIGTMFLFIFVSNWSGALLPRKIIQLPHGELAAPTNDINTTVALALPTSMAYFYAGFTKKGLSYFGKYIQPTPILLPINILEDFTKPLSLSFRLFGNILADELVVVVLVSLVPSVVPIPVMFLGLFTSGIQALIFATLAAAYIGESMEGHH.

The next 5 helical transmembrane spans lie at 38 to 58 (QVLI…TIAV), 95 to 115 (VPFI…GALL), 134 to 154 (INTT…AGFT), 199 to 219 (LVVV…VMFL), and 220 to 240 (GLFT…AYIG).

This sequence belongs to the ATPase A chain family. In terms of assembly, F-type ATPases have 2 components, CF(1) - the catalytic core - and CF(0) - the membrane proton channel. CF(1) has five subunits: alpha(3), beta(3), gamma(1), delta(1), epsilon(1). CF(0) has four main subunits: a, b, b' and c.

It is found in the plastid. Its subcellular location is the chloroplast thylakoid membrane. Functionally, key component of the proton channel; it plays a direct role in the translocation of protons across the membrane. The chain is ATP synthase subunit a, chloroplastic from Liriodendron tulipifera (Tuliptree).